Consider the following 429-residue polypeptide: 3-phosphoshikimate 1-carboxyvinyltransferase (429 aa).

The 3-phosphoshikimate site is built by lysine 23, serine 24, and arginine 28. Lysine 23 lines the phosphoenolpyruvate pocket. Glycine 95 and arginine 123 together coordinate phosphoenolpyruvate. Serine 168, glutamine 170, aspartate 316, and lysine 343 together coordinate 3-phosphoshikimate. Phosphoenolpyruvate is bound at residue glutamine 170. Catalysis depends on aspartate 316, which acts as the Proton acceptor. Phosphoenolpyruvate contacts are provided by arginine 347 and arginine 389.

This sequence belongs to the EPSP synthase family. In terms of assembly, monomer.

The protein resides in the cytoplasm. The catalysed reaction is 3-phosphoshikimate + phosphoenolpyruvate = 5-O-(1-carboxyvinyl)-3-phosphoshikimate + phosphate. It functions in the pathway metabolic intermediate biosynthesis; chorismate biosynthesis; chorismate from D-erythrose 4-phosphate and phosphoenolpyruvate: step 6/7. In terms of biological role, catalyzes the transfer of the enolpyruvyl moiety of phosphoenolpyruvate (PEP) to the 5-hydroxyl of shikimate-3-phosphate (S3P) to produce enolpyruvyl shikimate-3-phosphate and inorganic phosphate. The sequence is that of 3-phosphoshikimate 1-carboxyvinyltransferase from Bacillus cereus (strain AH187).